A 43-amino-acid chain; its full sequence is Alpha-1-antiproteinase 4 (43 aa).

It belongs to the serpin family. Post-translationally, N-glycosylated with carbohydrates having biantennary side chains. In terms of tissue distribution, plasma.

The protein resides in the secreted. This Equus caballus (Horse) protein is Alpha-1-antiproteinase 4.